A 23-amino-acid polypeptide reads, in one-letter code: Potassium channel toxin alpha-KTx 13.1 (23 aa).

3 disulfides stabilise this stretch: C2-C15, C5-C20, and C9-C22. An interaction with Ca(2+)-activated K(+) channels region spans residues 13-20 (GKCINGRC).

As to expression, expressed by the venom gland.

It is found in the secreted. Functionally, blocks reversibly Shaker B potassium channels. Also displaces binding of noxiustoxin to mouse brain synaptosome membranes. This is Potassium channel toxin alpha-KTx 13.1 from Tityus obscurus (Amazonian scorpion).